A 590-amino-acid chain; its full sequence is Cytidine monophosphate-N-acetylneuraminic acid hydroxylase (590 aa).

The region spanning 14–112 is the Rieske domain; that stretch reads LSPVEVASLK…VEMDENNRLL (99 aa). Residues Cys-54, His-56, Cys-75, and His-78 each coordinate [2Fe-2S] cluster.

The protein belongs to the CMP-Neu5Ac hydroxylase family. It depends on [2Fe-2S] cluster as a cofactor.

Its subcellular location is the cytoplasm. The enzyme catalyses CMP-N-acetyl-beta-neuraminate + 2 Fe(II)-[cytochrome b5] + O2 + 2 H(+) = CMP-N-glycoloyl-beta-neuraminate + 2 Fe(III)-[cytochrome b5] + H2O. The protein operates within amino-sugar metabolism; N-acetylneuraminate metabolism. In terms of biological role, sialic acids are components of carbohydrate chains of glycoconjugates and are involved in cell-cell recognition and cell-pathogen interactions. Catalyzes the conversion of CMP-N-acetylneuraminic acid (CMP-Neu5Ac) into its hydroxylated derivative CMP-N-glycolylneuraminic acid (CMP-Neu5Gc), a sialic acid abundantly expressed at the surface of many cells. The protein is Cytidine monophosphate-N-acetylneuraminic acid hydroxylase of Pan troglodytes (Chimpanzee).